We begin with the raw amino-acid sequence, 605 residues long: Protein kinase wis1 (605 aa).

The segment covering 1-20 (MSSPNNQPLSCSLRQLSISP) has biased composition (polar residues). Residues 1 to 141 (MSSPNNQPLS…TPPGPFPGGL (141 aa)) are disordered. 2 stretches are compositionally biased toward low complexity: residues 31–73 (GSLL…SSPS) and 90–105 (RLGRSTSSRSRNSLNL). Basic and acidic residues predominate over residues 106 to 115 (DMKDPSEKPR). Serine 168 bears the Phosphoserine mark. Positions 188-200 (SQLAGRLSNSPVK) are enriched in polar residues. Residues 188–263 (SQLAGRLSNS…PSSMASRRGL (76 aa)) form a disordered region. Positions 244-256 (SNSNPTSPVSPSS) are enriched in low complexity. Serine 253 bears the Phosphoserine mark. In terms of domain architecture, Protein kinase spans 320-579 (IIKLEELGKG…YHELANHPWL (260 aa)). ATP contacts are provided by residues 326–334 (LGKGNYGVV) and lysine 349. The active-site Proton acceptor is aspartate 441. Position 469 is a phosphoserine (serine 469). Threonine 473 is modified (phosphothreonine).

This sequence belongs to the protein kinase superfamily. STE Ser/Thr protein kinase family. MAP kinase kinase subfamily. Post-translationally, dephosphorylated by pyp1 and pyp2.

It carries out the reaction L-seryl-[protein] + ATP = O-phospho-L-seryl-[protein] + ADP + H(+). The catalysed reaction is L-threonyl-[protein] + ATP = O-phospho-L-threonyl-[protein] + ADP + H(+). The enzyme catalyses L-tyrosyl-[protein] + ATP = O-phospho-L-tyrosyl-[protein] + ADP + H(+). Functionally, dosage-dependent regulator of mitosis with serine/ threonine protein kinase activity. May play a role in the integration of nutritional sensing with the control over entry into mitosis. It may interact with cdc25, wee1 and win1. May activate sty1. This is Protein kinase wis1 (wis1) from Schizosaccharomyces pombe (strain 972 / ATCC 24843) (Fission yeast).